We begin with the raw amino-acid sequence, 127 residues long: Fluoride-specific ion channel FluC (127 aa).

Transmembrane regions (helical) follow at residues 2–22, 35–55, 68–88, and 104–124; these read LSSLLAVFIGGGMGSVLRWAI, LGTLAVNLLGGFIIGLAIAIF, LITTGFCGGLTTFSTFSLEVV, and LLNLAGSLVMTLLAFMLVVWI. The Na(+) site is built by G75 and T78.

This sequence belongs to the fluoride channel Fluc/FEX (TC 1.A.43) family.

Its subcellular location is the cell inner membrane. It catalyses the reaction fluoride(in) = fluoride(out). Na(+) is not transported, but it plays an essential structural role and its presence is essential for fluoride channel function. Its function is as follows. Fluoride-specific ion channel. Important for reducing fluoride concentration in the cell, thus reducing its toxicity. This Serratia proteamaculans (strain 568) protein is Fluoride-specific ion channel FluC.